The chain runs to 85 residues: Homeobox protein knotted-1-like 4 (85 aa).

Residues 1–21 form the ELK domain; it reads ELKYQLLKKYSGYLSSLRQEF. Positions 22 to 85 form a DNA-binding region, homeobox; TALE-type; the sequence is SKKKKKGKLP…NQRKRHWKPS (64 aa).

The protein belongs to the TALE/KNOX homeobox family. As to expression, strongly expressed in ear inflorescence primordia and shoot meristem. Weakly expressed in embryos. Absent from leaves.

It localises to the nucleus. Functionally, probably binds to the DNA sequence 5'-TGAC-3'. This chain is Homeobox protein knotted-1-like 4 (KNOX4), found in Zea mays (Maize).